The following is a 127-amino-acid chain: Nuclear transport factor 2 (127 aa).

N6-acetyllysine is present on Lys4. One can recognise an NTF2 domain in the interval 10–121 (IGSSFIQHYY…WVCTNDMFRL (112 aa)).

As to quaternary structure, homodimer. Interacts with RAN (GDP-bound form); the interaction is direct and regulates RAN nuclear import. Interacts with the nucleoporins NUP54, NUP58 and NUP62 (via FG repeats); recruits NUTF2 to the nuclear pore complex a step required for NUTF2-mediated GDP-bound RAN nuclear import. Interacts with CAPG; mediates its nuclear import.

It localises to the cytoplasm. The protein localises to the cytosol. Its subcellular location is the nucleus outer membrane. It is found in the nucleus. The protein resides in the nuclear pore complex. It localises to the nucleus inner membrane. The protein localises to the nucleoplasm. In terms of biological role, mediates the import of GDP-bound RAN from the cytoplasm into the nucleus which is essential for the function of RAN in cargo receptor-mediated nucleocytoplasmic transport. Thereby, plays indirectly a more general role in cargo receptor-mediated nucleocytoplasmic transport. Interacts with GDP-bound RAN in the cytosol, recruits it to the nuclear pore complex via its interaction with nucleoporins and promotes its nuclear import. In Bos taurus (Bovine), this protein is Nuclear transport factor 2.